Reading from the N-terminus, the 254-residue chain is Trans-aconitate 2-methyltransferase (254 aa).

Belongs to the methyltransferase superfamily. Tam family.

It localises to the cytoplasm. The enzyme catalyses trans-aconitate + S-adenosyl-L-methionine = (E)-3-(methoxycarbonyl)pent-2-enedioate + S-adenosyl-L-homocysteine. Catalyzes the S-adenosylmethionine monomethyl esterification of trans-aconitate. The chain is Trans-aconitate 2-methyltransferase from Rhodococcus jostii (strain RHA1).